The following is a 164-amino-acid chain: Transcriptional repressor NrdR (164 aa).

A zinc finger spans residues 3–34; it reads CPKCNYNKSSVVDSRQAEDGNTIRRRRECESC. One can recognise an ATP-cone domain in the interval 49–139; it reads LLVIKKDGTR…VYKSFKDLDE (91 aa).

This sequence belongs to the NrdR family. It depends on Zn(2+) as a cofactor.

Negatively regulates transcription of bacterial ribonucleotide reductase nrd genes and operons by binding to NrdR-boxes. This chain is Transcriptional repressor NrdR, found in Streptococcus equi subsp. zooepidemicus (strain H70).